Reading from the N-terminus, the 362-residue chain is Thiol protease aleurain (362 aa).

An N-terminal signal peptide occupies residues 1-22; that stretch reads MAHARVLLLALAVLATAAVAVA. Residues 23–143 constitute a propeptide, activation peptide; that stretch reads SSSSFADSNP…GNHLMRDAAA (121 aa). 2 cysteine pairs are disulfide-bonded: cysteine 165–cysteine 208 and cysteine 199–cysteine 241. The active site involves cysteine 168. Asparagine 188 carries N-linked (GlcNAc...) asparagine glycosylation. Asparagine 257 carries an N-linked (GlcNAc...) asparagine glycan. The cysteines at positions 299 and 349 are disulfide-linked. Catalysis depends on residues histidine 308 and asparagine 328.

This sequence belongs to the peptidase C1 family.

It is found in the vacuole. The enzyme catalyses Hydrolysis of proteins, acting as an aminopeptidase (notably, cleaving Arg-|-Xaa bonds) as well as an endopeptidase.. Functionally, may play a role in proteolysis leading to mobilization of nitrogen during senescence and starvation. This Hordeum vulgare (Barley) protein is Thiol protease aleurain.